The sequence spans 231 residues: Orotidine 5'-phosphate decarboxylase (231 aa).

Residues aspartate 11, lysine 33, 60–69, threonine 119, arginine 180, glutamine 189, glycine 209, and arginine 210 contribute to the substrate site; that span reads DLKFHDIPNT. Residue lysine 62 is the Proton donor of the active site.

This sequence belongs to the OMP decarboxylase family. Type 1 subfamily. In terms of assembly, homodimer.

The catalysed reaction is orotidine 5'-phosphate + H(+) = UMP + CO2. It functions in the pathway pyrimidine metabolism; UMP biosynthesis via de novo pathway; UMP from orotate: step 2/2. Functionally, catalyzes the decarboxylation of orotidine 5'-monophosphate (OMP) to uridine 5'-monophosphate (UMP). This chain is Orotidine 5'-phosphate decarboxylase, found in Idiomarina loihiensis (strain ATCC BAA-735 / DSM 15497 / L2-TR).